The chain runs to 934 residues: Protein translocase subunit SecA (934 aa).

ATP-binding positions include glutamine 87, 105 to 109 (GEGKT), and aspartate 515. The Zn(2+) site is built by cysteine 918, cysteine 920, cysteine 929, and histidine 930.

This sequence belongs to the SecA family. As to quaternary structure, monomer and homodimer. Part of the essential Sec protein translocation apparatus which comprises SecA, SecYEG and auxiliary proteins SecDF-YajC and YidC. Zn(2+) serves as cofactor.

It localises to the cell inner membrane. The protein localises to the cytoplasm. It catalyses the reaction ATP + H2O + cellular proteinSide 1 = ADP + phosphate + cellular proteinSide 2.. In terms of biological role, part of the Sec protein translocase complex. Interacts with the SecYEG preprotein conducting channel. Has a central role in coupling the hydrolysis of ATP to the transfer of proteins into and across the cell membrane, serving both as a receptor for the preprotein-SecB complex and as an ATP-driven molecular motor driving the stepwise translocation of polypeptide chains across the membrane. The sequence is that of Protein translocase subunit SecA from Ralstonia pickettii (strain 12J).